The sequence spans 159 residues: U1 small nuclear ribonucleoprotein C (159 aa).

The Matrin-type zinc finger occupies 4–36; it reads FYCDYCDTYLTHDSPSVRKTHCSGRKHKENVKD. Tyr8 is modified (phosphotyrosine). The residue at position 17 (Ser17) is a Phosphoserine. At Lys52 the chain carries N6-acetyllysine. 2 disordered regions span residues 62-96 and 140-159; these read IPPT…PAPH and RPPA…RPDR. The span at 63–92 shows a compositional bias: pro residues; sequence PPTPFSAPPPAGAMIPPPPSLPGPPRPGMM.

It belongs to the U1 small nuclear ribonucleoprotein C family. In terms of assembly, component of the U1 snRNP. The U1 snRNP is composed of the U1 snRNA and the 7 core Sm proteins SNRPB, SNRPD1, SNRPD2, SNRPD3, SNRPE, SNRPF and SNRPG that assemble in a heptameric protein ring on the Sm site of the small nuclear RNA to form the core snRNP, and at least 3 U1 snRNP-specific proteins SNRNP70/U1-70K, SNRPA/U1-A and SNRPC/U1-C. SNRPC/U1-C interacts with U1 snRNA and the 5' splice-site region of the pre-mRNA. Interacts (via N-terminus) with TIA1 (via C-terminus); thereby promoting spliceosomal U1 snRNP recruitment to 5' splice sites.

Its subcellular location is the nucleus. Functionally, component of the spliceosomal U1 snRNP, which is essential for recognition of the pre-mRNA 5' splice-site and the subsequent assembly of the spliceosome. SNRPC/U1-C is directly involved in initial 5' splice-site recognition for both constitutive and regulated alternative splicing. The interaction with the 5' splice-site seems to precede base-pairing between the pre-mRNA and the U1 snRNA. Stimulates commitment or early (E) complex formation by stabilizing the base pairing of the 5' end of the U1 snRNA and the 5' splice-site region. This is U1 small nuclear ribonucleoprotein C from Homo sapiens (Human).